Here is a 57-residue protein sequence, read N- to C-terminus: UPF0391 membrane protein azo1765 (57 aa).

Transmembrane regions (helical) follow at residues 1–21 and 33–53; these read MIKW…FGFT and VLFF…VGLG.

It belongs to the UPF0391 family.

The protein localises to the cell membrane. The sequence is that of UPF0391 membrane protein azo1765 from Azoarcus sp. (strain BH72).